The sequence spans 209 residues: Uracil phosphoribosyltransferase (209 aa).

5-phospho-alpha-D-ribose 1-diphosphate-binding positions include Arg79, Arg104, and 131–139 (DPMLATGVS). Uracil-binding positions include Ile194 and 199-201 (GDA). Asp200 contributes to the 5-phospho-alpha-D-ribose 1-diphosphate binding site.

Belongs to the UPRTase family. It depends on Mg(2+) as a cofactor.

The catalysed reaction is UMP + diphosphate = 5-phospho-alpha-D-ribose 1-diphosphate + uracil. The protein operates within pyrimidine metabolism; UMP biosynthesis via salvage pathway; UMP from uracil: step 1/1. Its activity is regulated as follows. Allosterically activated by GTP. Its function is as follows. Catalyzes the conversion of uracil and 5-phospho-alpha-D-ribose 1-diphosphate (PRPP) to UMP and diphosphate. This Thermotoga petrophila (strain ATCC BAA-488 / DSM 13995 / JCM 10881 / RKU-1) protein is Uracil phosphoribosyltransferase.